The following is a 462-amino-acid chain: MTSNANQYTWAGRFSEPVSDLVKRYTASVDFDQRMWRQDIRGSLAHARMLAKQGIIAAADLADIERGMAIVTEEIESGKFEWSLDLEDVHLNIEKRLTALVGDAGKRLHTGRSRNDQVATDIRLYLRDSIDDILVLIKAFRSALVDLAEKEAATPMPGFTHLQVAQPVTFGHHMLAYFEMFGRDAERYADCRKRVARLPLGAAALAGTTYPIDRAYVAEQLGFEGVCENSLDAVSDRDFAIEFTAACALLMMHISRLSEELVMWMSPRIGFIQIADRFCTGSSIMPQKKNPDVPELARGKTGRVYGQLMSLLTLMKSQPLAYNKDNQEDKEPLFDAVDTVTDTLRIFADMAGGITVRADNMKAALTQGFATATDLADYLVKKGLPFRDAHEAVGHAVKAAEQKGVDLPQLTLDELKAFCPQVESDVFAVLTVEGSLASRNHIGGTAPEQVRAAVARARQRLS.

This sequence belongs to the lyase 1 family. Argininosuccinate lyase subfamily.

Its subcellular location is the cytoplasm. It catalyses the reaction 2-(N(omega)-L-arginino)succinate = fumarate + L-arginine. It participates in amino-acid biosynthesis; L-arginine biosynthesis; L-arginine from L-ornithine and carbamoyl phosphate: step 3/3. The polypeptide is Argininosuccinate lyase (Dechloromonas aromatica (strain RCB)).